The following is a 222-amino-acid chain: Large ribosomal subunit protein uL4 (222 aa).

This sequence belongs to the universal ribosomal protein uL4 family. In terms of assembly, part of the 50S ribosomal subunit.

Functionally, one of the primary rRNA binding proteins, this protein initially binds near the 5'-end of the 23S rRNA. It is important during the early stages of 50S assembly. It makes multiple contacts with different domains of the 23S rRNA in the assembled 50S subunit and ribosome. Forms part of the polypeptide exit tunnel. The protein is Large ribosomal subunit protein uL4 of Methylacidiphilum infernorum (isolate V4) (Methylokorus infernorum (strain V4)).